Consider the following 72-residue polypeptide: MAVEKVNSSSSLAEVIDRILDKGIVIDAWVRVSLVGIELLSIEARVVIASVETYLKYAEAVGLTASAAVPAA.

The protein belongs to the gas vesicle GvpA family. As to quaternary structure, the gas vesicle shell is 2 nm thick and consists of a single layer of this protein. It forms helical ribs nearly perpendicular to the long axis of the vesicle.

The protein resides in the gas vesicle shell. Functionally, gas vesicles are hollow, gas filled proteinaceous nanostructures found in some microorganisms. During planktonic growth they allow positioning of the organism at a favorable depth for light or nutrient acquisition. GvpA forms the protein shell. The sequence is that of Gas vesicle protein A from Pseudanabaena galeata (strain PCC 6901).